The primary structure comprises 707 residues: DNA topoisomerase 1 (707 aa).

Positions 1–140 constitute a Toprim domain; sequence MYAILAEKPS…IKRLWTSSMT (140 aa). Positions 157-596 constitute a Topo IA-type catalytic domain; the sequence is TLPLYYQAKA…HSKKLSSVLF (440 aa). The interaction with DNA stretch occupies residues 199–204; the sequence is SLGRVQ. Tyr323 (O-(5'-phospho-DNA)-tyrosine intermediate) is an active-site residue.

Belongs to the type IA topoisomerase family. As to quaternary structure, monomer.

The catalysed reaction is ATP-independent breakage of single-stranded DNA, followed by passage and rejoining.. In terms of biological role, releases the supercoiling and torsional tension of DNA, which is introduced during the DNA replication and transcription, by transiently cleaving and rejoining one strand of the DNA duplex. Introduces a single-strand break via transesterification at a target site in duplex DNA. The scissile phosphodiester is attacked by the catalytic tyrosine of the enzyme, resulting in the formation of a DNA-(5'-phosphotyrosyl)-enzyme intermediate and the expulsion of a 3'-OH DNA strand. The free DNA strand then undergoes passage around the unbroken strand, thus removing DNA supercoils. Finally, in the religation step, the DNA 3'-OH attacks the covalent intermediate to expel the active-site tyrosine and restore the DNA phosphodiester backbone. In Alkalihalophilus pseudofirmus (strain ATCC BAA-2126 / JCM 17055 / OF4) (Bacillus pseudofirmus), this protein is DNA topoisomerase 1 (topA).